We begin with the raw amino-acid sequence, 189 residues long: Adenylate kinase (189 aa).

11–16 contacts ATP; that stretch reads GSGKGT. The interval 31–60 is NMP; it reads STGDVLRAEIKNGTELGKTAKGYIDQGQLI. AMP-binding positions include Thr-32, Arg-37, 58-60, 86-89, and Gln-93; these read QLI and GFPR. The tract at residues 127–137 is LID; the sequence is KRGKESGRADD. Arg-128 contributes to the ATP binding site. The AMP site is built by Arg-134 and Arg-145. An ATP-binding site is contributed by Gly-173.

Belongs to the adenylate kinase family. In terms of assembly, monomer.

The protein localises to the cytoplasm. It carries out the reaction AMP + ATP = 2 ADP. Its pathway is purine metabolism; AMP biosynthesis via salvage pathway; AMP from ADP: step 1/1. Functionally, catalyzes the reversible transfer of the terminal phosphate group between ATP and AMP. Plays an important role in cellular energy homeostasis and in adenine nucleotide metabolism. The protein is Adenylate kinase of Bacteroides fragilis (strain ATCC 25285 / DSM 2151 / CCUG 4856 / JCM 11019 / LMG 10263 / NCTC 9343 / Onslow / VPI 2553 / EN-2).